The sequence spans 300 residues: GTPase Era (300 aa).

The 169-residue stretch at 7–175 (KSGFAVMAGL…KTAVAETLPF (169 aa)) folds into the Era-type G domain. A G1 region spans residues 15-22 (GLPNAGKS). 15–22 (GLPNAGKS) lines the GTP pocket. The interval 41 to 45 (QMTRQ) is G2. The tract at residues 62-65 (DTPG) is G3. GTP is bound by residues 62–66 (DTPGF) and 124–127 (NKAD). Residues 124–127 (NKAD) are G4. Positions 154 to 156 (ISA) are G5. The KH type-2 domain occupies 198–283 (IREQIFNLYE…RLELEVSVEP (86 aa)).

The protein belongs to the TRAFAC class TrmE-Era-EngA-EngB-Septin-like GTPase superfamily. Era GTPase family. In terms of assembly, monomer.

The protein resides in the cytoplasm. It localises to the cell inner membrane. Its function is as follows. An essential GTPase that binds both GDP and GTP, with rapid nucleotide exchange. Plays a role in 16S rRNA processing and 30S ribosomal subunit biogenesis and possibly also in cell cycle regulation and energy metabolism. This chain is GTPase Era, found in Elusimicrobium minutum (strain Pei191).